The sequence spans 298 residues: Transcription factor BOA (298 aa).

Disordered regions lie at residues 1 to 26 (MGKE…EYRI), 79 to 143 (LRSS…KRPR), and 206 to 232 (EDPY…GGGS). Acidic residues predominate over residues 10–20 (YGDDDGEDAGG). Basic and acidic residues predominate over residues 104–113 (DPKKQKKSDG). Positions 122-131 (STAEEGDSGP) are enriched in acidic residues. The myb-like GARP DNA-binding region spans 138-197 (TSKRPRLVWTPQLHKRFVDVVAHLGIKNAVPKTIMQLMNVEGLTRENVASHLQKYRLYLK). The span at 209-227 (YSSSDQLFSSTPVPPQSFQ) shows a compositional bias: polar residues.

Its subcellular location is the nucleus. In terms of biological role, transcription factor that is a critical component of the regulatory circuit of the circadian clock. Binds to specific sites on CCA1 promoter leading to CCA1 activation. Is required for the rhythmic expression of other clock genes such as LHY, GI and APRR1/TOC1. The sequence is that of Transcription factor BOA (BOA) from Arabidopsis thaliana (Mouse-ear cress).